We begin with the raw amino-acid sequence, 451 residues long: MDDIFTQCREGNAVAVRLWLDNTENDLNQGDDHGFSPLHWACREGRSAVVEMLIMRGARINVMNRGDDTPLHLAASHGHRDIVQKLLQYKADINAVNEHGNVPLHYACFWGQDQVAEDLVANGALVSICNKYGEMPMDKAKAPLRELLRERAEKMGQNLNRIPYKDTFWKGTTRTRPRNGTLNKHSGIDFKQLNFLAKLNENHSGELWKGRWQGNDIVVKVLKVRDWSTRKSRDFNEECPRLRIFSHPNVLPVLGACQSPPAPHPTLITHWMPYGSLYNVLHEGTNFVVDQSQAVKFALDMARGMAFLHTLEPLIPRHALNSRSVMIDEDMTARISMADVKFSFQCPGRMYAPAWVAPEALQKKPEDTNRRSADMWSFAVLLWELVTREVPFADLSNMEIGMKVALEGRPTIPPGISPHVCKLMKICMNEDPAKRPKFDMIVPILEKMQDK.

Residue M1 is modified to N-acetylmethionine. ANK repeat units follow at residues 2-30 (DDIF…LNQG), 31-63 (DDHG…INVM), 64-96 (NRGD…INAV), 97-129 (NEHG…VSIC), and 130-174 (NKYG…GTTR). Positions 33 to 139 (HGFSPLHWAC…NKYGEMPMDK (107 aa)) are interaction with LIMS1. T173 bears the Phosphothreonine mark. The segment at 180–212 (GTLNKHSGIDFKQLNFLAKLNENHSGELWKGRW) is PH-like; mediates interaction with TGFB1I1. Position 186 is a phosphoserine (S186). The 253-residue stretch at 193 to 445 (LNFLAKLNEN…PKFDMIVPIL (253 aa)) folds into the Protein kinase domain. 4 residues coordinate ATP: N200, N202, H203, and S204. Residue S246 is modified to Phosphoserine. ATP-binding residues include H270, M272, and N279. Residue D339 coordinates Mg(2+). K341 is an ATP binding site. A Nuclear localization signal motif is present at residues 363-371 (KKPEDTNRR). At K425 the chain carries N6-acetyllysine.

Belongs to the protein kinase superfamily. TKL Ser/Thr protein kinase family. As to quaternary structure, component of the heterotrimeric IPP (ILK-PINCH-PARVIN) complex composed of ILK, LIMS1/PINCH and PARVA; the complex binds to F-actin via the C-terminal tail of LIMS1 and the N-terminal region of PARVA, promoting F-actin filament bundling. Formation of the IPP complex is dependent on protein kinase C and precedes integrin-mediated cell adhesion and spreading. ILK also interacts with LIMS2/PINCH2 and with PARVB and PARVG which may substitute for LIMS1 and PARVA in the IPP complex; PARVA and PARVB compete for the same binding site. Interaction with PARVG promotes the establishment of cell polarity required for leukocyte migration. Interacts with the cytoplasmic domain of integrin ITGB1 and may also interact with integrins ITGB2, ITGB3 and/or ITGB5. Interacts probably also with TGFB1I1. Interacts (via ANK repeats) with EPHA1 (via SAM domain); stimulated by EFNA1 but independent of the kinase activity of EPHA1. Interacts with FERMT2. Interacts with LIMD2; leading to activate the protein kinase activity. Interacts with PXN/PAXILLIN (via LD motif 4). Interacts with CCDC25 (via cytoplasmic region); initiating the ILK-PARVB cascade to induce cytoskeleton rearrangement and directional migration of cells. Interacts with IQGAP1; the interaction is required for localization of IQGAP1 to the cell cortex. Phosphorylation by PAK1 modulates ILK subcellular location by promoting its nuclear export.

It localises to the cell junction. Its subcellular location is the focal adhesion. It is found in the cell membrane. The protein resides in the cell projection. The protein localises to the lamellipodium. It localises to the cytoplasm. Its subcellular location is the myofibril. It is found in the sarcomere. The protein resides in the nucleus. The protein localises to the cytoskeleton. It localises to the microtubule organizing center. Its subcellular location is the centrosome. It is found in the cell cortex. Its function is as follows. Scaffold protein which mediates protein-protein interactions during a range of cellular events including focal adhesion assembly, cell adhesion and cell migration. Regulates integrin-mediated signal transduction by contributing to inside-out integrin activation. Recruits PARVA and LIMS1/PITCH to form the heterotrimeric IPP (ILK-PINCH-PARVIN) complex which binds to F-actin via the C-terminal tail of LIMS1 and the N-terminal region of PARVA, promoting F-actin filament bundling, a process required to generate force for actin cytoskeleton reorganization and subsequent dynamic cell adhesion events such as cell spreading and migration. Binding to PARVA promotes effective assembly of ILK into focal adhesions while PARVA-bound ILK can simultaneously engage integrin-beta cytoplasmic tails to mediate cell adhesion. Plays a role with PARVG in promoting the cell adhesion and spreading of leukocytes. Acts as an upstream effector of both AKT1/PKB and GSK3. Mediates trafficking of caveolae to the cell surface in an ITGB1-dependent manner by promoting the recruitment of IQGAP1 to the cell cortex which cooperates with its effector DIAPH1 to locally stabilize microtubules and allow stable insertion of caveolae into the plasma membrane. Required for the maintenance of mitotic spindle integrity by promoting phosphorylation of TACC3 by AURKA. Associates with chromatin and may act as a negative regulator of transcription when located in the nucleus. In Cavia porcellus (Guinea pig), this protein is Scaffold protein ILK.